A 625-amino-acid polypeptide reads, in one-letter code: Glucokinase regulatory protein (625 aa).

SIS domains are found at residues valine 90–alanine 286 and valine 320–lysine 499. Beta-D-fructose 1-phosphate contacts are provided by residues threonine 109 to serine 110, glutamate 153, and serine 179 to glycine 181. A beta-D-fructose 6-phosphate-binding site is contributed by threonine 109–serine 110. Serine 179–glycine 181 contributes to the beta-D-fructose 6-phosphate binding site. The segment at alanine 199 to valine 200 is important for interaction with GCK. Position 348 (glutamate 348) interacts with beta-D-fructose 1-phosphate. The interval leucine 463 to phenylalanine 465 is essential for interaction with GCK. A beta-D-fructose 1-phosphate-binding site is contributed by lysine 514. Position 514 (lysine 514) interacts with beta-D-fructose 6-phosphate.

It belongs to the GCKR family. As to quaternary structure, interacts (fructose 6-phosphate bound form) with GCK. As to expression, found in liver and pancreas. Not detected in muscle, brain, heart, thymus, intestine, uterus, adipose tissue, kidney, adrenal, lung or spleen.

It localises to the cytoplasm. The protein resides in the nucleus. The protein localises to the mitochondrion. Its function is as follows. Regulates glucokinase (GCK) by forming an inactive complex with this enzyme. Acts by promoting GCK recruitment to the nucleus, possibly to provide a reserve of GCK that can be quickly released in the cytoplasm after a meal. The affinity of GCKR for GCK is modulated by fructose metabolites: GCKR with bound fructose 6-phosphate has increased affinity for GCK, while GCKR with bound fructose 1-phosphate has strongly decreased affinity for GCK and does not inhibit GCK activity. The protein is Glucokinase regulatory protein of Homo sapiens (Human).